Here is a 452-residue protein sequence, read N- to C-terminus: Pup--protein ligase (452 aa).

Glutamate 9 is a Mg(2+) binding site. Residue arginine 53 participates in ATP binding. Tyrosine 55 provides a ligand contact to Mg(2+). The active-site Proton acceptor is aspartate 57. Glutamate 63 is a binding site for Mg(2+). ATP is bound by residues threonine 66 and tryptophan 419.

The protein belongs to the Pup ligase/Pup deamidase family. Pup-conjugating enzyme subfamily.

The enzyme catalyses ATP + [prokaryotic ubiquitin-like protein]-L-glutamate + [protein]-L-lysine = ADP + phosphate + N(6)-([prokaryotic ubiquitin-like protein]-gamma-L-glutamyl)-[protein]-L-lysine.. It participates in protein degradation; proteasomal Pup-dependent pathway. It functions in the pathway protein modification; protein pupylation. Functionally, catalyzes the covalent attachment of the prokaryotic ubiquitin-like protein modifier Pup to the proteasomal substrate proteins, thereby targeting them for proteasomal degradation. This tagging system is termed pupylation. The ligation reaction involves the side-chain carboxylate of the C-terminal glutamate of Pup and the side-chain amino group of a substrate lysine. This is Pup--protein ligase from Mycobacterium avium (strain 104).